The sequence spans 398 residues: Succinate--CoA ligase [ADP-forming] subunit beta (398 aa).

In terms of domain architecture, ATP-grasp spans 9-254 (KALLKSFGAP…KTEEDAKEIE (246 aa)). ATP contacts are provided by residues Lys46, 53 to 55 (GRG), Glu109, Ala112, and Glu117. 2 residues coordinate Mg(2+): Asn209 and Asp223. Residues Asn274 and 331 to 333 (GIM) each bind substrate.

This sequence belongs to the succinate/malate CoA ligase beta subunit family. In terms of assembly, heterotetramer of two alpha and two beta subunits. Requires Mg(2+) as cofactor.

The catalysed reaction is succinate + ATP + CoA = succinyl-CoA + ADP + phosphate. It catalyses the reaction GTP + succinate + CoA = succinyl-CoA + GDP + phosphate. It participates in carbohydrate metabolism; tricarboxylic acid cycle; succinate from succinyl-CoA (ligase route): step 1/1. In terms of biological role, succinyl-CoA synthetase functions in the citric acid cycle (TCA), coupling the hydrolysis of succinyl-CoA to the synthesis of either ATP or GTP and thus represents the only step of substrate-level phosphorylation in the TCA. The beta subunit provides nucleotide specificity of the enzyme and binds the substrate succinate, while the binding sites for coenzyme A and phosphate are found in the alpha subunit. This Allorhizobium ampelinum (strain ATCC BAA-846 / DSM 112012 / S4) (Agrobacterium vitis (strain S4)) protein is Succinate--CoA ligase [ADP-forming] subunit beta.